The following is a 550-amino-acid chain: Solute carrier family 22 member 6 (550 aa).

Residues 1 to 9 are Cytoplasmic-facing; that stretch reads MAFNDLLQQ. A helical transmembrane segment spans residues 10 to 30; that stretch reads VGGVGRFQQIQVTLVVLPLLL. The Extracellular segment spans residues 31–135; the sequence is MASHNTLQNF…LVCSHRALRQ (105 aa). N-linked (GlcNAc...) asparagine glycosylation is found at asparagine 39, asparagine 92, and asparagine 113. The chain crosses the membrane as a helical span at residues 136–156; that stretch reads LAQSLYMVGVLLGAMVFGYLA. At 157–164 the chain is on the cytoplasmic side; that stretch reads DRLGRRKV. A helical membrane pass occupies residues 165–187; it reads LILNYLQTAVSGTCTAFAPNFSI. Residues 188–195 are Extracellular-facing; the sequence is YCAFRLLS. Residues 196-216 traverse the membrane as a helical segment; it reads GMSLAGISLNCMTLNVEWMPI. The Cytoplasmic portion of the chain corresponds to 217–224; it reads HTRACVGT. A helical transmembrane segment spans residues 225 to 245; sequence LIGYVYSLGQFLLAGVAYAVP. The Extracellular portion of the chain corresponds to 246-248; that stretch reads HWR. The chain crosses the membrane as a helical span at residues 249 to 269; the sequence is HLQLLVSAPFFAFFIYSWFFI. Residues 270 to 337 lie on the Cytoplasmic side of the membrane; it reads ESARWHSSSG…ELLRCPTLRH (68 aa). The chain crosses the membrane as a helical span at residues 338-358; that stretch reads LFLCLSMLWFATSFAYYGLVM. The Extracellular segment spans residues 359–368; that stretch reads DLQGFGVSIY. A helical transmembrane segment spans residues 369-389; it reads LIQVIFGAVDLPAKLVGFLVI. The Cytoplasmic segment spans residues 390–395; that stretch reads NSLGRR. The chain crosses the membrane as a helical span at residues 396–416; the sequence is PAQMAALLLAGICILLNGVIP. The Extracellular segment spans residues 417-420; the sequence is QDQS. Residues 421–444 traverse the membrane as a helical segment; that stretch reads IVRTSLAVPGKGCLAASFNCIFLY. Residues 445-455 are Cytoplasmic-facing; sequence TGELYPTMIRQ. A helical transmembrane segment spans residues 456–475; the sequence is TGMGMGSTMARVGSIVSPLV. Topologically, residues 476–484 are extracellular; that stretch reads SMTAELYPS. A helical transmembrane segment spans residues 485 to 505; it reads MPLFIYGAVPVAASAVTVLLP. At 506-550 the chain is on the cytoplasmic side; sequence ETLGQPLPDTVQDLESRKGKQTRQQQEHQKYMVPLQASAQEKNGL. Residues 514–550 form a disordered region; that stretch reads DTVQDLESRKGKQTRQQQEHQKYMVPLQASAQEKNGL.

This sequence belongs to the major facilitator (TC 2.A.1) superfamily. Organic cation transporter (TC 2.A.1.19) family. Glycosylated. Glycosylation is necessary for proper targeting of the transporter to the plasma membrane.

It localises to the cell membrane. It catalyses the reaction prostaglandin F2alpha(out) = prostaglandin F2alpha(in). It carries out the reaction prostaglandin E2(out) = prostaglandin E2(in). Involved in the renal elimination of endogenous and exogenous organic anions. Functions as organic anion exchanger when the uptake of one molecule of organic anion is coupled with an efflux of one molecule of endogenous dicarboxylic acid (glutarate, ketoglutarate, etc). Mediates the transport of prostaglandin E2 (PGE2) and prostaglandin F2-alpha (PGF2-alpha) and may be involved in their renal excretion. Also mediates the sodium-independent uptake of p-aminohippurate (PAH), 2,3-dimercapto-1-propanesulfonic acid (DMPS), cidofovir, adefovir, 9-(2-phosphonylmethoxyethyl) guanine (PMEG), 9-(2-phosphonylmethoxyethyl) diaminopurine (PMEDAP), ochratoxin (OTA), acyclovir (ACV), 3'-azido-3-'deoxythymidine (AZT), cimetidine (CMD), 2,4-dichloro-phenoxyacetate (2,4-D), hippurate (HA), indoleacetate (IA), indoxyl sulfate (IS) and 3-carboxy-4-methyl-5-propyl-2-furanpropionate (CMPF) and edaravone sulfate. PAH uptake is inhibited by p-chloromercuribenzenesulphonate (PCMBS), diethyl pyrocarbonate (DEPC), indomethacin, sulindac, diclofenac, carprofen, okadaic acid, benzothiazolylcysteine (BTC), S-chlorotrifluoroethylcysteine (CTFC), cysteine S-conjugates S-dichlorovinylcysteine (DCVC), furosemide, steviol, phorbol 12-myristate 13-acetate (PMA), calcium ionophore A23187, benzylpenicillin, bumetamide, losartan, probenecid, phenol red, urate, glutarate and alpha-ketoglutarate. The sequence is that of Solute carrier family 22 member 6 (SLC22A6) from Pongo abelii (Sumatran orangutan).